The chain runs to 224 residues: 2,5-diamino-6-ribosylamino-4(3H)-pyrimidinone 5'-phosphate reductase (224 aa).

NADP(+) is bound by residues threonine 57, aspartate 61, 82–85 (STAN), valine 131, and 153–156 (GASI).

This sequence belongs to the HTP reductase family. In terms of assembly, homodimer.

It catalyses the reaction 2,5-diamino-6-(1-D-ribitylamino)pyrimidin-4(3H)-one 5'-phosphate + NADP(+) = 2,5-diamino-6-(1-D-ribosylamino)pyrimidin-4(3H)-one 5'-phosphate + NADPH + H(+). The catalysed reaction is 2,5-diamino-6-(1-D-ribitylamino)pyrimidin-4(3H)-one 5'-phosphate + NAD(+) = 2,5-diamino-6-(1-D-ribosylamino)pyrimidin-4(3H)-one 5'-phosphate + NADH + H(+). Its pathway is cofactor biosynthesis; riboflavin biosynthesis. In terms of biological role, catalyzes an early step in riboflavin biosynthesis, the NADPH-dependent reduction of the ribose side chain of 2,5-diamino-6-ribosylamino-4(3H)-pyrimidinone 5'-phosphate, yielding 2,5-diamino-6-ribitylamino-4(3H)-pyrimidinone 5'-phosphate. The protein is 2,5-diamino-6-ribosylamino-4(3H)-pyrimidinone 5'-phosphate reductase (ribD2) of Aquifex aeolicus (strain VF5).